Consider the following 947-residue polypeptide: Bifunctional glutamine synthetase adenylyltransferase/adenylyl-removing enzyme (947 aa).

An adenylyl removase region spans residues 1-443; it reads MQLPSSLVSV…VFETLIGDDE (443 aa). The tract at residues 451–947 is adenylyl transferase; it reads ARHFHELWDM…VKQAWNQWFA (497 aa).

Belongs to the GlnE family. Mg(2+) serves as cofactor.

It catalyses the reaction [glutamine synthetase]-O(4)-(5'-adenylyl)-L-tyrosine + phosphate = [glutamine synthetase]-L-tyrosine + ADP. It carries out the reaction [glutamine synthetase]-L-tyrosine + ATP = [glutamine synthetase]-O(4)-(5'-adenylyl)-L-tyrosine + diphosphate. Its function is as follows. Involved in the regulation of glutamine synthetase GlnA, a key enzyme in the process to assimilate ammonia. When cellular nitrogen levels are high, the C-terminal adenylyl transferase (AT) inactivates GlnA by covalent transfer of an adenylyl group from ATP to specific tyrosine residue of GlnA, thus reducing its activity. Conversely, when nitrogen levels are low, the N-terminal adenylyl removase (AR) activates GlnA by removing the adenylyl group by phosphorolysis, increasing its activity. The regulatory region of GlnE binds the signal transduction protein PII (GlnB) which indicates the nitrogen status of the cell. The protein is Bifunctional glutamine synthetase adenylyltransferase/adenylyl-removing enzyme of Vibrio parahaemolyticus serotype O3:K6 (strain RIMD 2210633).